The chain runs to 484 residues: Glucan endo-1,3-beta-glucosidase 5 (484 aa).

The signal sequence occupies residues 1-26 (MLFKGVFAVFFVITLLYASLLIEVEG). A glycan (N-linked (GlcNAc...) asparagine) is linked at asparagine 102. Glutamate 122 functions as the Proton donor in the catalytic mechanism. N-linked (GlcNAc...) asparagine glycosylation is found at asparagine 129 and asparagine 260. Residue glutamate 267 is the Nucleophile of the active site. The cysteines at positions 366 and 428 are disulfide-linked. N-linked (GlcNAc...) asparagine glycosylation is present at asparagine 409. Alanine 460 is lipidated: GPI-anchor amidated alanine. Positions 461–484 (SAMMPITRSTAVLLLLSICLYIVL) are cleaved as a propeptide — removed in mature form.

It belongs to the glycosyl hydrolase 17 family. Post-translationally, contains two additional disulfide bonds.

The protein resides in the cell membrane. It carries out the reaction Hydrolysis of (1-&gt;3)-beta-D-glucosidic linkages in (1-&gt;3)-beta-D-glucans.. The polypeptide is Glucan endo-1,3-beta-glucosidase 5 (Arabidopsis thaliana (Mouse-ear cress)).